The sequence spans 300 residues: Protein N-terminal and lysine N-methyltransferase EFM7 (300 aa).

Residues Trp75, 101–103, Asp123, Trp156, and Ser179 each bind S-adenosyl-L-methionine; that span reads GAG.

The protein belongs to the class I-like SAM-binding methyltransferase superfamily. EFM7 family.

It is found in the cytoplasm. In terms of biological role, S-adenosyl-L-methionine-dependent protein methyltransferase that trimethylates the N-terminal glycine 'Gly-2' of elongation factor 1-alpha, before also catalyzing the mono- and dimethylation of 'Lys-3'. This Cryptococcus neoformans var. neoformans serotype D (strain JEC21 / ATCC MYA-565) (Filobasidiella neoformans) protein is Protein N-terminal and lysine N-methyltransferase EFM7.